We begin with the raw amino-acid sequence, 417 residues long: Pigment epithelium-derived factor (417 aa).

A signal peptide spans M1–S19. A disordered region spans residues G17–E41. A compositionally biased stretch (polar residues) spans S18–G28. Q20 is subject to Pyrrolidone carboxylic acid. Phosphoserine is present on S24. Residue N284 is glycosylated (N-linked (GlcNAc...) asparagine).

The protein belongs to the serpin family. Interacts with PNPLA2; this interaction stimulates the phospholipase A2 activity of PNPLA2. Highly expressed in the liver, gastric glandular mucosa and renal tubules. It is also expressed in the brain, heart, lung retina and testes.

Its subcellular location is the secreted. It is found in the melanosome. Neurotrophic protein; induces extensive neuronal differentiation in retinoblastoma cells. Potent inhibitor of angiogenesis. As it does not undergo the S (stressed) to R (relaxed) conformational transition characteristic of active serpins, it exhibits no serine protease inhibitory activity. This chain is Pigment epithelium-derived factor (Serpinf1), found in Mus musculus (Mouse).